A 43-amino-acid polypeptide reads, in one-letter code: uncharacterized protein (43 aa).

A signal peptide spans 1–22 (MKRKIIAIGIFFRLFIIHIHFS).

This is an uncharacterized protein from Schizosaccharomyces pombe (strain 972 / ATCC 24843) (Fission yeast).